The chain runs to 51 residues: Small ribosomal subunit protein eS31 (51 aa).

The Zn(2+) site is built by C21, C24, C39, and C42. Residues 21 to 42 (CPRCGPGVFLAEHEDRFSCGRC) form a C4-type zinc finger.

Belongs to the eukaryotic ribosomal protein eS31 family. Part of the 30S ribosomal subunit. Requires Zn(2+) as cofactor.

This Picrophilus torridus (strain ATCC 700027 / DSM 9790 / JCM 10055 / NBRC 100828 / KAW 2/3) protein is Small ribosomal subunit protein eS31.